The following is a 304-amino-acid chain: Cell division protein ZipA (304 aa).

The Periplasmic segment spans residues 1–5 (MQDLR). The chain crosses the membrane as a helical span at residues 6–26 (LILIVVGAIAIIALLLHGLWT). The Cytoplasmic segment spans residues 27–304 (SRKERSSVFR…IRDVIDANSH (278 aa)). The segment at 31-165 (RSSVFRDRPH…PEPQSQPKQK (135 aa)) is disordered. Positions 121 to 132 (ARPETHKPDQPE) are enriched in basic and acidic residues. Positions 137–158 (AAPAAAETAPAPAEPAQKTPEP) are enriched in low complexity.

It belongs to the ZipA family. As to quaternary structure, interacts with FtsZ via their C-terminal domains.

It localises to the cell inner membrane. Essential cell division protein that stabilizes the FtsZ protofilaments by cross-linking them and that serves as a cytoplasmic membrane anchor for the Z ring. Also required for the recruitment to the septal ring of downstream cell division proteins. The sequence is that of Cell division protein ZipA from Erwinia tasmaniensis (strain DSM 17950 / CFBP 7177 / CIP 109463 / NCPPB 4357 / Et1/99).